The primary structure comprises 154 residues: MTHYEGDLRPAGARFVIVCSRWNARITDALVAGACRTLVDNGVSDDAVDVVRVPGAWEIPIVANLLAQVGQHAAIIALGCVVRGDTRHYEHVADLCAEGMMSVQMQTGVPVLNGVLAVECIKDAEMRAGGSHGNKGAETALAALEMVSLLEKLP.

Residues Trp22, 56–58 (AWE), and 80–82 (CVV) contribute to the 5-amino-6-(D-ribitylamino)uracil site. 85 to 86 (DT) is a binding site for (2S)-2-hydroxy-3-oxobutyl phosphate. Residue His88 is the Proton donor of the active site. 5-amino-6-(D-ribitylamino)uracil is bound at residue Asn113. Arg127 is a binding site for (2S)-2-hydroxy-3-oxobutyl phosphate.

The protein belongs to the DMRL synthase family. In terms of assembly, forms an icosahedral capsid composed of 60 subunits, arranged as a dodecamer of pentamers.

The catalysed reaction is (2S)-2-hydroxy-3-oxobutyl phosphate + 5-amino-6-(D-ribitylamino)uracil = 6,7-dimethyl-8-(1-D-ribityl)lumazine + phosphate + 2 H2O + H(+). The protein operates within cofactor biosynthesis; riboflavin biosynthesis; riboflavin from 2-hydroxy-3-oxobutyl phosphate and 5-amino-6-(D-ribitylamino)uracil: step 1/2. In terms of biological role, catalyzes the formation of 6,7-dimethyl-8-ribityllumazine by condensation of 5-amino-6-(D-ribitylamino)uracil with 3,4-dihydroxy-2-butanone 4-phosphate. This is the penultimate step in the biosynthesis of riboflavin. In Xylella fastidiosa (strain 9a5c), this protein is 6,7-dimethyl-8-ribityllumazine synthase.